The chain runs to 971 residues: MLKLKGEFRTAKGLKDENKKQAQTLVFTDNQVEFKSNKQYHLRQLQQLKKKLLTLQQELEIRTQELQASYRSLLQYQSILEKQTSDLLVLHHHCKLKEDEVILYEEEMGSHSKNTGEKLHLAQEQLALAGDKIVSLERSLNLYRDKYQTSLSNIELLECQVKMLEEELSGLICQDPENKGDHSKVRIYTSPCMIQEHQETLKRLSEVWQKVSEQDDLIQELRNKLACSNSLVLEREEALIKLRADFASYTATHRHPPTSSEDCEDITKILKYLQEQKDSQCLHVEEYQNLVKDLRLELEAVSEQKKKIMKDMMKLELDLHGLREETSCVIEKKDKETVFLQYRLQDLQQQYTESQKLSLKKDKLLQDKDERLNELEKKLTQVQCLFLEKETELEKLQSTTKELDANLQEVRQSTSKIDNEGLRSEIQKLKESLEEAREQLRVSDQNLSQCKDEAHLSANNLEDAHRKLENCLLQDKRKDDVIKDLQSQLQKLQKESSETEEERKNNRQQLLELSSELNEGQRRLSSAEKEKSLLQKTLDEEEKKIDELLHGAKVSEQKQRELTNSLSKLQDELAETKRLLEEKREQLRKSKDQEKALEEEIEALRQESKKKEKMAKEQLRKLEEEKENLQAELSSCSSQLDSSINKYNNSQKVIQELNTEIARQKDSIMILQTQLDSAIQKEKNCFQNMVSKETYEELLRKSGTCQDDLTQALEKLTQATSETKSLQRNLQQTQERKAQLEDEIMAYEERMKKLNMELKKLQGFQQQSELEVHNFDKKLEEMGNQVLQWQRQHQSDLKMLAAKETQLREFQEEMTALKENLLADEKEPSLMPSKPAPKENYRHHRENDQIMCNVEQWAKEQKLANEKLGNKLREQVKYIAKLTGEKDHLHNVMAHLQQENKKLKNEIEEKKLKAGTPRICAKVLGPCKLEPSQKGKLCGALGWRGVCQDPLPKMDLTKYTGVPHCSGSSYC.

6 coiled-coil regions span residues 37–69 (NKQYHLRQLQQLKKKLLTLQQELEIRTQELQAS), 117–229 (EKLH…ACSN), 282–325 (LHVE…LREE), 355–680 (QKLS…SAIQ), 706–827 (QDDL…DEKE), and 879–916 (IAKLTGEKDHLHNVMAHLQQENKKLKNEIEEKKLKAGT).

As to expression, expressed in testis and more specifically in ODF, the sperm tail specific cytoskeletal structure. Also expressed in epididymides and brain.

It is found in the cell projection. It localises to the cilium. Its subcellular location is the flagellum. Functionally, required for normal spermatogenesis. It functions as a scaffold protein that attaches the sperm head-tail connecting piece to the nuclear envelope, thus maintaining sperm head and tail integrity. May also be involved in the general organization of cellular cytoskeleton. In Rattus norvegicus (Rat), this protein is Polyamine-modulated factor 1-binding protein 1 (Pmfbp1).